Consider the following 248-residue polypeptide: Probable transcriptional regulatory protein FTF0655 (248 aa).

The protein belongs to the TACO1 family.

It localises to the cytoplasm. The polypeptide is Probable transcriptional regulatory protein FTF0655 (Francisella tularensis subsp. tularensis (strain FSC 198)).